Here is a 155-residue protein sequence, read N- to C-terminus: Ribosomal RNA large subunit methyltransferase H (155 aa).

Residues leucine 73, glycine 104, and 123–128 each bind S-adenosyl-L-methionine; that span reads LSPLTL.

Belongs to the RNA methyltransferase RlmH family. As to quaternary structure, homodimer.

It is found in the cytoplasm. It catalyses the reaction pseudouridine(1915) in 23S rRNA + S-adenosyl-L-methionine = N(3)-methylpseudouridine(1915) in 23S rRNA + S-adenosyl-L-homocysteine + H(+). Its function is as follows. Specifically methylates the pseudouridine at position 1915 (m3Psi1915) in 23S rRNA. The sequence is that of Ribosomal RNA large subunit methyltransferase H from Pseudomonas savastanoi pv. phaseolicola (strain 1448A / Race 6) (Pseudomonas syringae pv. phaseolicola (strain 1448A / Race 6)).